A 261-amino-acid polypeptide reads, in one-letter code: 5'-nucleotidase SurE (261 aa).

4 residues coordinate a divalent metal cation: Asp-8, Asp-9, Ser-39, and Asn-94.

It belongs to the SurE nucleotidase family. It depends on a divalent metal cation as a cofactor.

It is found in the cytoplasm. It catalyses the reaction a ribonucleoside 5'-phosphate + H2O = a ribonucleoside + phosphate. In terms of biological role, nucleotidase that shows phosphatase activity on nucleoside 5'-monophosphates. The polypeptide is 5'-nucleotidase SurE (Archaeoglobus fulgidus (strain ATCC 49558 / DSM 4304 / JCM 9628 / NBRC 100126 / VC-16)).